The following is an 82-amino-acid chain: Envelope small membrane protein (82 aa).

Over 1–19 (MTFPRALTVIDDNGMVISI) the chain is Virion surface. The helical transmembrane segment at 20–40 (IFWFLLIIILILLSIALLNII) threads the bilayer. Residues 41-82 (KLCMVCCNLGRTVIIVPVQHAYDAYKNFMRIKAYNPDGALLV) lie on the Intravirion side of the membrane.

The protein belongs to the alphacoronaviruses E protein family. In terms of assembly, homopentamer. Interacts with membrane protein M in the budding compartment of the host cell, which is located between endoplasmic reticulum and the Golgi complex. Interacts with Nucleoprotein.

It is found in the host Golgi apparatus membrane. In terms of biological role, plays a central role in virus morphogenesis and assembly. Acts as a viroporin and self-assembles in host membranes forming pentameric protein-lipid pores that allow ion transport. Also plays a role in the induction of apoptosis. This Sus scrofa (Pig) protein is Envelope small membrane protein.